Here is a 190-residue protein sequence, read N- to C-terminus: Bifunctional protein PyrR (190 aa).

Positions 107-119 match the PRPP-binding motif; the sequence is IILVDDVLYSGRT.

This sequence belongs to the purine/pyrimidine phosphoribosyltransferase family. PyrR subfamily.

It carries out the reaction UMP + diphosphate = 5-phospho-alpha-D-ribose 1-diphosphate + uracil. Its function is as follows. Regulates the transcription of the pyrimidine nucleotide (pyr) operon in response to exogenous pyrimidines. Functionally, also displays a weak uracil phosphoribosyltransferase activity which is not physiologically significant. In Corynebacterium diphtheriae (strain ATCC 700971 / NCTC 13129 / Biotype gravis), this protein is Bifunctional protein PyrR.